A 315-amino-acid chain; its full sequence is tRNA dimethylallyltransferase (315 aa).

10–17 (GPTATGKS) provides a ligand contact to ATP. A substrate-binding site is contributed by 12–17 (TATGKS). Residues 35 to 38 (DSMQ) form an interaction with substrate tRNA region.

It belongs to the IPP transferase family. Monomer. Mg(2+) serves as cofactor.

The catalysed reaction is adenosine(37) in tRNA + dimethylallyl diphosphate = N(6)-dimethylallyladenosine(37) in tRNA + diphosphate. In terms of biological role, catalyzes the transfer of a dimethylallyl group onto the adenine at position 37 in tRNAs that read codons beginning with uridine, leading to the formation of N6-(dimethylallyl)adenosine (i(6)A). The polypeptide is tRNA dimethylallyltransferase (Caldanaerobacter subterraneus subsp. tengcongensis (strain DSM 15242 / JCM 11007 / NBRC 100824 / MB4) (Thermoanaerobacter tengcongensis)).